The sequence spans 209 residues: Large ribosomal subunit protein bL25 (209 aa).

Residues 190 to 209 (PDASAAPVAAPAAPAKKGKK) are disordered.

Belongs to the bacterial ribosomal protein bL25 family. CTC subfamily. In terms of assembly, part of the 50S ribosomal subunit; part of the 5S rRNA/L5/L18/L25 subcomplex. Contacts the 5S rRNA. Binds to the 5S rRNA independently of L5 and L18.

Its function is as follows. This is one of the proteins that binds to the 5S RNA in the ribosome where it forms part of the central protuberance. The chain is Large ribosomal subunit protein bL25 from Delftia acidovorans (strain DSM 14801 / SPH-1).